The chain runs to 226 residues: Glutathione peroxidase 3 (226 aa).

The first 24 residues, 1–24 (MARLFRASCLLSLLLAGFIPPSQG), serve as a signal peptide directing secretion. The active site involves selenocysteine 73. A non-standard amino acid (selenocysteine) is located at residue selenocysteine 73.

It belongs to the glutathione peroxidase family. As to quaternary structure, homotetramer. In terms of tissue distribution, secreted in plasma.

The protein localises to the secreted. The catalysed reaction is 2 glutathione + H2O2 = glutathione disulfide + 2 H2O. It carries out the reaction tert-butyl hydroperoxide + 2 glutathione = tert-butanol + glutathione disulfide + H2O. Protects cells and enzymes from oxidative damage, by catalyzing the reduction of hydrogen peroxide, lipid peroxides and organic hydroperoxide, by glutathione. This is Glutathione peroxidase 3 from Bos taurus (Bovine).